We begin with the raw amino-acid sequence, 69 residues long: Sec-independent protein translocase protein TatA (69 aa).

The chain crosses the membrane as a helical span at residues M1–G21.

This sequence belongs to the TatA/E family. In terms of assembly, forms a complex with TatC.

It is found in the cell inner membrane. Part of the twin-arginine translocation (Tat) system that transports large folded proteins containing a characteristic twin-arginine motif in their signal peptide across membranes. TatA could form the protein-conducting channel of the Tat system. The chain is Sec-independent protein translocase protein TatA from Chlorobium phaeovibrioides (strain DSM 265 / 1930) (Prosthecochloris vibrioformis (strain DSM 265)).